Consider the following 380-residue polypeptide: Queuine tRNA-ribosyltransferase (380 aa).

The Proton acceptor role is filled by D96. Residues D96–F100, D150, Q193, and G220 each bind substrate. Positions G251–S257 are RNA binding. D270 acts as the Nucleophile in catalysis. Positions T275–R279 are RNA binding; important for wobble base 34 recognition. Zn(2+) is bound by residues C308, C310, C313, and H339.

The protein belongs to the queuine tRNA-ribosyltransferase family. In terms of assembly, homodimer. Within each dimer, one monomer is responsible for RNA recognition and catalysis, while the other monomer binds to the replacement base PreQ1. Zn(2+) is required as a cofactor.

The enzyme catalyses 7-aminomethyl-7-carbaguanine + guanosine(34) in tRNA = 7-aminomethyl-7-carbaguanosine(34) in tRNA + guanine. Its pathway is tRNA modification; tRNA-queuosine biosynthesis. Catalyzes the base-exchange of a guanine (G) residue with the queuine precursor 7-aminomethyl-7-deazaguanine (PreQ1) at position 34 (anticodon wobble position) in tRNAs with GU(N) anticodons (tRNA-Asp, -Asn, -His and -Tyr). Catalysis occurs through a double-displacement mechanism. The nucleophile active site attacks the C1' of nucleotide 34 to detach the guanine base from the RNA, forming a covalent enzyme-RNA intermediate. The proton acceptor active site deprotonates the incoming PreQ1, allowing a nucleophilic attack on the C1' of the ribose to form the product. After dissociation, two additional enzymatic reactions on the tRNA convert PreQ1 to queuine (Q), resulting in the hypermodified nucleoside queuosine (7-(((4,5-cis-dihydroxy-2-cyclopenten-1-yl)amino)methyl)-7-deazaguanosine). The chain is Queuine tRNA-ribosyltransferase from Streptococcus pyogenes serotype M6 (strain ATCC BAA-946 / MGAS10394).